The following is a 335-amino-acid chain: Acetyl-coenzyme A carboxylase carboxyl transferase subunit alpha (335 aa).

The region spanning 40 to 294 (QLETLAARRR…KEAIEKHLNA (255 aa)) is the CoA carboxyltransferase C-terminal domain.

The protein belongs to the AccA family. As to quaternary structure, acetyl-CoA carboxylase is a heterohexamer composed of biotin carboxyl carrier protein (AccB), biotin carboxylase (AccC) and two subunits each of ACCase subunit alpha (AccA) and ACCase subunit beta (AccD).

It is found in the cytoplasm. The enzyme catalyses N(6)-carboxybiotinyl-L-lysyl-[protein] + acetyl-CoA = N(6)-biotinyl-L-lysyl-[protein] + malonyl-CoA. Its pathway is lipid metabolism; malonyl-CoA biosynthesis; malonyl-CoA from acetyl-CoA: step 1/1. Functionally, component of the acetyl coenzyme A carboxylase (ACC) complex. First, biotin carboxylase catalyzes the carboxylation of biotin on its carrier protein (BCCP) and then the CO(2) group is transferred by the carboxyltransferase to acetyl-CoA to form malonyl-CoA. The sequence is that of Acetyl-coenzyme A carboxylase carboxyl transferase subunit alpha from Prochlorococcus marinus (strain MIT 9215).